A 493-amino-acid polypeptide reads, in one-letter code: Involucrin (493 aa).

3 disordered regions span residues 1–47 (MSQQ…CQKV), 60–123 (EEKH…GQLE), and 139–493 (KRDE…GQHE). The segment covering 76–89 (EQQQPQEQELQQQH) has biased composition (low complexity). Basic and acidic residues-rich tracts occupy residues 90-116 (WEQD…REKQ), 139-151 (KRDE…KEQL), 161-174 (QLKH…HLEL), 184-193 (NLEHQEKPLE), and 201-213 (QLKH…KPLE). Residues 228 to 240 (QEGQSELPEQQRG) are compositionally biased toward polar residues. Composition is skewed to basic and acidic residues over residues 250–270 (GQLK…HEEG), 282–360 (KHLE…HEGQ), 372–386 (KHLE…HPEQ), 411–431 (KHLE…EQLK), and 439–450 (QLKDLEQQERQL). Residues 473 to 493 (GEVLLPVEQQQQKQEVQGQHE) show a composition bias toward low complexity.

It belongs to the involucrin family. As to quaternary structure, directly or indirectly cross-linked to cornifelin (CNFN). In terms of processing, substrate of transglutaminase. Specific glutamines or lysines are cross-linked to keratins, desmoplakin and to inter involucrin molecules. In terms of tissue distribution, keratinocytes of epidermis and other stratified squamous epithelia.

The protein localises to the cytoplasm. Its function is as follows. Part of the insoluble cornified cell envelope (CE) of stratified squamous epithelia. The chain is Involucrin (IVL) from Saguinus oedipus (Cotton-top tamarin).